A 104-amino-acid chain; its full sequence is uncharacterized protein (104 aa).

Residues 24-69 (VIKQIIEKYNDKVKELDTLKNQYQNLQQDYENLKQQVSLQRQTMIS) adopt a coiled-coil conformation.

This is an uncharacterized protein from Acanthamoeba polyphaga mimivirus (APMV).